Reading from the N-terminus, the 931-residue chain is Glycine dehydrogenase (decarboxylating) (931 aa).

At Lys-684 the chain carries N6-(pyridoxal phosphate)lysine.

It belongs to the GcvP family. The glycine cleavage system is composed of four proteins: P, T, L and H. It depends on pyridoxal 5'-phosphate as a cofactor.

It carries out the reaction N(6)-[(R)-lipoyl]-L-lysyl-[glycine-cleavage complex H protein] + glycine + H(+) = N(6)-[(R)-S(8)-aminomethyldihydrolipoyl]-L-lysyl-[glycine-cleavage complex H protein] + CO2. Functionally, the glycine cleavage system catalyzes the degradation of glycine. The P protein binds the alpha-amino group of glycine through its pyridoxal phosphate cofactor; CO(2) is released and the remaining methylamine moiety is then transferred to the lipoamide cofactor of the H protein. This is Glycine dehydrogenase (decarboxylating) from Bartonella henselae (strain ATCC 49882 / DSM 28221 / CCUG 30454 / Houston 1) (Rochalimaea henselae).